A 447-amino-acid polypeptide reads, in one-letter code: UDP-N-acetylmuramate--L-alanine ligase (447 aa).

Residue 108–114 (GSHGKTS) coordinates ATP.

This sequence belongs to the MurCDEF family.

The protein localises to the cytoplasm. It carries out the reaction UDP-N-acetyl-alpha-D-muramate + L-alanine + ATP = UDP-N-acetyl-alpha-D-muramoyl-L-alanine + ADP + phosphate + H(+). It functions in the pathway cell wall biogenesis; peptidoglycan biosynthesis. Functionally, cell wall formation. The protein is UDP-N-acetylmuramate--L-alanine ligase of Listeria monocytogenes serovar 1/2a (strain ATCC BAA-679 / EGD-e).